The sequence spans 1282 residues: Cytokine receptor (1282 aa).

An N-terminal signal peptide occupies residues 1-23 (MVAQEQLVLLLMLLAGCRGGANA). The Extracellular segment spans residues 24 to 889 (ILDPGWVIPS…CTPDTHSVKA (866 aa)). 4 N-linked (GlcNAc...) asparagine glycosylation sites follow: Asn44, Asn86, Asn87, and Asn114. A disulfide bridge connects residues Cys47 and Cys106. 7 Fibronectin type-III domains span residues 124–220 (PLLV…NHFE), 227–327 (PGQN…TAPA), 329–431 (PRRP…SNRD), 436–535 (EPRN…KKDD), 537–631 (AKME…TGEA), 635–735 (QPRE…TAIG), and 736–836 (VPSP…LMST). Cys132 and Cys142 form a disulfide bridge. 2 N-linked (GlcNAc...) asparagine glycosylation sites follow: Asn143 and Asn156. Residues Cys173 and Cys183 are joined by a disulfide bond. 9 N-linked (GlcNAc...) asparagine glycosylation sites follow: Asn184, Asn230, Asn235, Asn278, Asn298, Asn310, Asn376, Asn448, and Asn466. A disulfide bridge links Cys472 with Cys482. Asn568, Asn581, Asn626, Asn676, Asn703, Asn777, Asn790, and Asn862 each carry an N-linked (GlcNAc...) asparagine glycan. Residues 890 to 910 (MYQTIEVTVAILVLGVIFYLV) form a helical membrane-spanning segment. Topologically, residues 911–1282 (YKKYRKMSDI…NAMAHNRHVL (372 aa)) are cytoplasmic. Ser976 carries the post-translational modification Phosphoserine. Disordered regions lie at residues 989–1092 (TASS…HTFS) and 1238–1258 (TVGS…QHSR). 2 stretches are compositionally biased toward basic and acidic residues: residues 999-1009 (VDRDGYDDNHE) and 1033-1064 (NDRE…DREQ).

This sequence belongs to the type I cytokine receptor family. In terms of assembly, interacts with wdp; the interaction promotes internalization of dome and its subsequent lysosomal degradation; thereby reducing JAK/STAT signaling. In terms of processing, undergoes lysosomal degradation. In terms of tissue distribution, in stage 11 embryos, tracheal pits show highest expression, at stage 14 high expression is detected in the posterior spiracles, gut and head.

It localises to the apicolateral cell membrane. Functionally, critical for epithelial morphogenesis during oogenesis; border cell migration. Required in the germarium for the polarization of follicle cells during encapsulation of germline cells. Required for embryonic segmentation and trachea specification. Essential receptor molecule for upd and JAK/STAT signaling during oogenesis. The protein is Cytokine receptor (dome) of Drosophila melanogaster (Fruit fly).